Consider the following 911-residue polypeptide: MATSVDNRHYPRLSSALNGGVVHSFKPPLVPSPSLDRDQDQSVNVPTEKSVDKTTKEDRFDSSDDEDESHNRYVSYYKEMVLKSNSDLEPTALDSRDESTGDKWIHRNSSMVRLTGKHPFNAEAPLPRLMHHGFITPVPLHYVRNHGGVPKAEWSDWSVEVTGLVKRPAGLTMEQLISEFPSREFPVTLVCAGNRRKEQNMVKQTIGFNWGSAGVSTSLWRGVALSDVLRRCGVYSKRGGALNVCFEGAEDLPGGGGSKYGTSIKKEMAMDPARDIILAYMQNGELLTPDHGFPVRVIIPGFIGGRMVKWLKRIIVTPQESDNYYHYKDNRVLPSYVDAELPNEESWWYRPEYIINELNINSVITTPGHEEILPINAFTTQKPYTLKGYAYSGGGKKVTRVEVTLDGGETWSVCELDHQEKPNKYGKFWCWCFWSLDVEVLDLLSAKEVAVRAWDESLNTQPEKLIWNLMGMMNNCWFRIKTNVCKPHRGEIGIVFEHPTRPGNQSGGWMAKERQIEKSSESHPTLKKSVSTPFMNTASKMYSMSEVRKHNSAESAWIIVHGHIYDCTRFLKDHPGGSDSILINAGTDCTEEFEAIHSDKAKKLLEDYRIGELITTGYDSSPNVSVHGGSSVMSLLAPIRQLAPTKNIALVNPREKVPVKLIEKTSISHDVRRFRFALPSEDQQLGLPVGKHIFLCATINDKLCLRAYTPTSTVDAVGYIDLVIKVYFKNVHPRFPNGGLMSQHPDSLPIGAVLDIKGPLGHIEYQGRGKFMVSGKPKFANKLAMLAGGTGITPIYQVIQSILSDPEDETEMFVVYANRTEDDILVREELEGWASKFPDRLKIWYVVEIAKEGWEYSTGFITEAVLREHVPEGLEGESLALACGPPPMIQFALQPNLEKMGYDIKEDLLIF.

The interval 1–68 (MATSVDNRHY…RFDSSDDEDE (68 aa)) is disordered. Residues 49-62 (KSVDKTTKEDRFDS) show a composition bias toward basic and acidic residues. Cys-191 serves as a coordination point for Mo-molybdopterin. A Cytochrome b5 heme-binding domain is found at 539–614 (SKMYSMSEVR…LEDYRIGELI (76 aa)). Residues His-574 and His-597 each contribute to the heme site. Residues 654–766 (REKVPVKLIE…KGPLGHIEYQ (113 aa)) form the FAD-binding FR-type domain. Residues 706–709 (RAYT), 723–727 (VIKVY), Phe-728, Phe-735, 740–742 (LMS), and Thr-793 contribute to the FAD site.

This sequence belongs to the nitrate reductase family. As to quaternary structure, homodimer. Requires FAD as cofactor. It depends on heme as a cofactor. The cofactor is Mo-molybdopterin.

The enzyme catalyses nitrite + NAD(+) + H2O = nitrate + NADH + H(+). Its function is as follows. Nitrate reductase is a key enzyme involved in the first step of nitrate assimilation in plants, fungi and bacteria. The sequence is that of Nitrate reductase [NADH], clone PBNBR1405 (NIA1) from Brassica napus (Rape).